The primary structure comprises 587 residues: D-lactate dehydrogenase [cytochrome] 1, mitochondrial (587 aa).

The region spanning 146 to 327 is the FAD-binding PCMH-type domain; sequence SPEQRPRIIL…TEATVKCHVK (182 aa).

This sequence belongs to the FAD-binding oxidoreductase/transferase type 4 family. Requires FAD as cofactor.

It is found in the mitochondrion inner membrane. The enzyme catalyses (R)-lactate + 2 Fe(III)-[cytochrome c] = 2 Fe(II)-[cytochrome c] + pyruvate + 2 H(+). Its function is as follows. Catalyzes the stereospecific oxidation of D-lactate to pyruvate. The chain is D-lactate dehydrogenase [cytochrome] 1, mitochondrial from Saccharomyces cerevisiae (strain ATCC 204508 / S288c) (Baker's yeast).